The sequence spans 298 residues: Lipoyl synthase (298 aa).

7 residues coordinate [4Fe-4S] cluster: cysteine 37, cysteine 42, cysteine 48, cysteine 63, cysteine 67, cysteine 70, and serine 277. In terms of domain architecture, Radical SAM core spans 49-266; that stretch reads WGGGTATVML…KTLAESYGFL (218 aa).

The protein belongs to the radical SAM superfamily. Lipoyl synthase family. [4Fe-4S] cluster is required as a cofactor.

The protein resides in the cytoplasm. The enzyme catalyses [[Fe-S] cluster scaffold protein carrying a second [4Fe-4S](2+) cluster] + N(6)-octanoyl-L-lysyl-[protein] + 2 oxidized [2Fe-2S]-[ferredoxin] + 2 S-adenosyl-L-methionine + 4 H(+) = [[Fe-S] cluster scaffold protein] + N(6)-[(R)-dihydrolipoyl]-L-lysyl-[protein] + 4 Fe(3+) + 2 hydrogen sulfide + 2 5'-deoxyadenosine + 2 L-methionine + 2 reduced [2Fe-2S]-[ferredoxin]. Its pathway is protein modification; protein lipoylation via endogenous pathway; protein N(6)-(lipoyl)lysine from octanoyl-[acyl-carrier-protein]: step 2/2. Catalyzes the radical-mediated insertion of two sulfur atoms into the C-6 and C-8 positions of the octanoyl moiety bound to the lipoyl domains of lipoate-dependent enzymes, thereby converting the octanoylated domains into lipoylated derivatives. The polypeptide is Lipoyl synthase (Myxococcus xanthus (strain DK1622)).